Consider the following 735-residue polypeptide: Catalase-peroxidase (735 aa).

Positions 1-26 are enriched in polar residues; it reads MENQNRQNASQCPFHGSITNQSSNRT. Residues 1–29 form a disordered region; sequence MENQNRQNASQCPFHGSITNQSSNRTTNK. A cross-link (tryptophyl-tyrosyl-methioninium (Trp-Tyr) (with M-249)) is located at residues 100–223; the sequence is WHSAGTYRIG…LAASVMGLIY (124 aa). Catalysis depends on His101, which acts as the Proton acceptor. Positions 223–249 form a cross-link, tryptophyl-tyrosyl-methioninium (Tyr-Met) (with W-100); sequence YVNPEGPDGKPDPKAAARDIRETFRRM. His264 is a binding site for heme b.

It belongs to the peroxidase family. Peroxidase/catalase subfamily. In terms of assembly, homodimer or homotetramer. The cofactor is heme b. In terms of processing, formation of the three residue Trp-Tyr-Met cross-link is important for the catalase, but not the peroxidase activity of the enzyme.

The catalysed reaction is H2O2 + AH2 = A + 2 H2O. It catalyses the reaction 2 H2O2 = O2 + 2 H2O. In terms of biological role, bifunctional enzyme with both catalase and broad-spectrum peroxidase activity. The sequence is that of Catalase-peroxidase from Geobacillus thermodenitrificans (strain NG80-2).